The primary structure comprises 33 residues: Beta-amanitin proprotein (33 aa).

A propeptide spanning residues 1 to 10 (MSDINATRLP) is cleaved from the precursor. A cross-link (cyclopeptide (Ile-Pro)) is located at residues 11 to 18 (IWGIGCDP). Positions 12 to 16 (WGIGC) form a cross-link, 2'-cysteinyl-6'-hydroxytryptophan sulfoxide (Trp-Cys). Residues 19-33 (CVGDDVAALTTRGEA) constitute a propeptide that is removed on maturation.

It belongs to the MSDIN fungal toxin family. In terms of processing, processed by the macrocyclase-peptidase enzyme POPB to yield a toxic cyclic decapeptide. POPB first removes 10 residues from the N-terminus. Conformational trapping of the remaining peptide forces the enzyme to release this intermediate rather than proceed to macrocyclization. The enzyme rebinds the remaining peptide in a different conformation and catalyzes macrocyclization of the N-terminal 8 residues.

In terms of biological role, toxin belonging to the bicyclic octapeptides amatoxins that acts by binding non-competitively to RNA polymerase II and greatly slowing the elongation of transcripts from target promoters. The chain is Beta-amanitin proprotein from Amanita rimosa.